Here is a 487-residue protein sequence, read N- to C-terminus: NADH-quinone oxidoreductase subunit N (487 aa).

The next 13 helical transmembrane spans lie at 7–27 (ILGPALPEILLAVLGLVLLMV), 38–58 (LVGLLAVYGLLMALAVVGLGA), 79–99 (YAKALTLLGAVLTLLLSMVWL), 111–131 (ILVLFATIGMMMMISANDLIA), 164–184 (FVLGALASGLLLYGMSLVYGF), 207–227 (LLIGIVFIIAGLAFKVSAVPF), 238–258 (APTPVTAFFAVAPKIAALTLF), 276–296 (VIILISILSMLLGGFAAIVQT), 301–321 (LMAYSSIGHVGYALIGIAAGT), 328–348 (VLVYLAIYLFMNVGTFTVILA), 373–393 (AAAMAVFMFSMAGVPPLAGFF), 406–426 (GLFALAVIGVLSSVVAAFYYL), and 451–471 (VILIGTAAVVALFFLAPSVVV).

Belongs to the complex I subunit 2 family. NDH-1 is composed of 14 different subunits. Subunits NuoA, H, J, K, L, M, N constitute the membrane sector of the complex.

Its subcellular location is the cell inner membrane. It carries out the reaction a quinone + NADH + 5 H(+)(in) = a quinol + NAD(+) + 4 H(+)(out). In terms of biological role, NDH-1 shuttles electrons from NADH, via FMN and iron-sulfur (Fe-S) centers, to quinones in the respiratory chain. The immediate electron acceptor for the enzyme in this species is believed to be ubiquinone. Couples the redox reaction to proton translocation (for every two electrons transferred, four hydrogen ions are translocated across the cytoplasmic membrane), and thus conserves the redox energy in a proton gradient. This is NADH-quinone oxidoreductase subunit N from Rhodospirillum rubrum (strain ATCC 11170 / ATH 1.1.1 / DSM 467 / LMG 4362 / NCIMB 8255 / S1).